The chain runs to 157 residues: Small ribosomal subunit protein uS7 (157 aa).

The protein belongs to the universal ribosomal protein uS7 family. As to quaternary structure, part of the 30S ribosomal subunit. Contacts proteins S9 and S11.

Functionally, one of the primary rRNA binding proteins, it binds directly to 16S rRNA where it nucleates assembly of the head domain of the 30S subunit. Is located at the subunit interface close to the decoding center, probably blocks exit of the E-site tRNA. In Roseiflexus castenholzii (strain DSM 13941 / HLO8), this protein is Small ribosomal subunit protein uS7.